The following is a 180-amino-acid chain: Formate hydrogenlyase subunit 6 (180 aa).

2 4Fe-4S ferredoxin-type domains span residues 31–60 (GKPEQNPQQCIGCAACVNACPSNALTVETD) and 66–95 (LAWEFNLGHCIFCGRCEEVCPTAAIKLSQE). Positions 40, 43, 46, 50, 75, 78, 81, and 85 each coordinate [4Fe-4S] cluster.

FHL comprises of a formate dehydrogenase, unidentified electron carriers and a hydrogenase (isoenzyme 3). In this non-energy conserving pathway, molecular hydrogen and carbodioxide are released from formate.

Functionally, probable electron transfer protein for hydrogenase 3. The chain is Formate hydrogenlyase subunit 6 (hycF) from Escherichia coli (strain K12).